A 407-amino-acid polypeptide reads, in one-letter code: P2X receptor D (407 aa).

Over 1–22 (MDWDNIFSYNTAKIVTIKDRRL) the chain is Cytoplasmic. The helical transmembrane segment at 23-43 (GGLHIIFMVLIIVYIVIYSTI) threads the bilayer. Residues 44-300 (YKKGYLLTET…IQNGEIGSFN (257 aa)) lie on the Lumenal side of the membrane. The segment at 283-296 (RHGIRLIFIQNGEI) is pore-forming motif. The chain crosses the membrane as a helical span at residues 301–321 (FQALLLTFVSGLGLLAISTVL). The Cytoplasmic portion of the chain corresponds to 322–407 (VDQLAIRFLP…QNIQNNNIIL (86 aa)). A disordered region spans residues 371 to 394 (KNNENNNNNDDYNDDDNEIFDDNN). Over residues 381-391 (DYNDDDNEIFD) the composition is skewed to acidic residues.

It belongs to the P2X receptor family.

It localises to the contractile vacuole membrane. Its function is as follows. P2X receptors are ligand-gated ion channels that play a role in intracellular calcium signaling. ATP does not evoke inward currents in p2xD. Not essential for osmoregulation. This chain is P2X receptor D (p2xD), found in Dictyostelium discoideum (Social amoeba).